The primary structure comprises 536 residues: Interferon alpha/beta receptor 2 (536 aa).

An N-terminal signal peptide occupies residues 1-26; it reads MLLSQNVSAIGPLNLYPMVHISLVFG. Over 27–246 the chain is Extracellular; it reads ISYVVPDLSD…RESESSEPAT (220 aa). Cystine bridges form between Cys-39/Cys-122 and Cys-85/Cys-93. Residues Asn-58, Asn-87, Asn-101, Asn-147, and Asn-191 are each glycosylated (N-linked (GlcNAc...) asparagine). Cys-210 and Cys-230 are joined by a disulfide. A helical membrane pass occupies residues 247–267; the sequence is IGGILILFLLAAVCISTVMIL. The Cytoplasmic segment spans residues 268-536; that stretch reads KRIGYICLRN…VRQVNLKNFN (269 aa). The residue at position 340 (Tyr-340) is a Phosphotyrosine. A run of 3 repeats spans residues 358–362, 363–367, and 368–372. The interval 358–372 is 3 X 5 AA tandem repeats of S-L-E-D-C; it reads SLEDCSLEDCSLEDC. A disordered region spans residues 369–434; it reads LEDCSDPSAE…SDSTEGSEGR (66 aa). Positions 420-429 are enriched in acidic residues; sequence TSEEDSDSTE. The mediates interaction with STAT2 (and required for the recruitment of USP18) stretch occupies residues 432–456; sequence EGRIVFNVNLNSVCVRALEDDKDSE. A Phosphoserine modification is found at Ser-480. Positions 487-522 are disordered; that stretch reads EEGTQLPFTDPSMECLRPQDALSDKSDTSESDVDIG. Phosphotyrosine is present on Tyr-525.

It belongs to the type II cytokine receptor family. Heterodimer with IFNAR1; forming the receptor for type I interferon. Interacts with the transcriptional factors STAT1 and STAT2. Interacts with JAK1. Interacts with USP18; indirectly via STAT2, it negatively regulates the assembly of the ternary interferon-IFNAR1-IFNAR2 complex and therefore type I interferon signaling. Phosphorylated on tyrosine residues upon interferon binding. Phosphorylation at Tyr-340 or Tyr-525 are sufficient to mediate interferon dependent activation of STAT1, STAT2 and STAT3 leading to antiproliferative effects on many different cell types. In terms of tissue distribution, expressed in the endometrium. Expressed in all tissues examined except conceptus at day 15 of pregnancy.

The protein resides in the cell membrane. In terms of biological role, together with IFNAR1, forms the heterodimeric receptor for type I interferons (including interferons alpha, beta, epsilon, omega and kappa). Type I interferon binding activates the JAK-STAT signaling cascade, resulting in transcriptional activation or repression of interferon-regulated genes that encode the effectors of the interferon response. Mechanistically, type I interferon-binding brings the IFNAR1 and IFNAR2 subunits into close proximity with one another, driving their associated Janus kinases (JAKs) (TYK2 bound to IFNAR1 and JAK1 bound to IFNAR2) to cross-phosphorylate one another. The activated kinases phosphorylate specific tyrosine residues on the intracellular domains of IFNAR1 and IFNAR2, forming docking sites for the STAT transcription factors (STAT1, STAT2 and STAT). STAT proteins are then phosphorylated by the JAKs, promoting their translocation into the nucleus to regulate expression of interferon-regulated genes. The chain is Interferon alpha/beta receptor 2 (IFNAR2) from Ovis aries (Sheep).